A 1282-amino-acid polypeptide reads, in one-letter code: Protein PIR (1282 aa).

Binds NAP1 and ROP2, but not ROP8. As to expression, expressed in roots, root hairs, hypocotyls, cotyledons, stems, leaves, trichomes and flowers.

In terms of biological role, involved in regulation of actin and microtubule organization. Part of a WAVE complex that activates the ARP2/3 complex. Interacts with the active form of RHO-family GTPases. The chain is Protein PIR (PIR) from Arabidopsis thaliana (Mouse-ear cress).